Consider the following 526-residue polypeptide: Cytochrome P450 monooxygenase BOT4 (526 aa).

An N-linked (GlcNAc...) asparagine glycan is attached at asparagine 5. A helical membrane pass occupies residues 41–61 (CLVAIILCRFIAVWSYNLWFH). Residues asparagine 205 and asparagine 281 are each glycosylated (N-linked (GlcNAc...) asparagine). Cysteine 464 lines the heme pocket.

Belongs to the cytochrome P450 family. Heme is required as a cofactor.

It localises to the membrane. It functions in the pathway secondary metabolite biosynthesis. Cytochrome P450 monooxygenase; part of the gene cluster that mediates the biosynthesis of botrydial. Botrydial is necessary for colonization of plant tissue by the T4 strain. It is a strain-dependent virulence factor since highly aggressive strains like SAS56 or B05 still retain substantial virulence when botrydial synthesis is impaired, since they produce also botcinic acid. The first step of botrydial biosynthesis is performed by the sesquiterpene synthase BOT2 which catalyzes the cyclization of farnesyl diphosphate (FPP) to presilphiperfolan-8-beta-ol (PSP). The cytochrome P450 monooxygenase BOT4 then catalyzes the hydroxylation at C-4 to give a probotryane intermediate. Acetylation of the hydroxyl at C-4 is carried out by the acetyltransferase BOT5, followed by the combined action of the P450 monooxygenases BOT3 and BOT1, to yield finally the glycol, via the regio- and stereospecific hydroxylations at C-10 and C-15 of the probotryane intermediates, respectively. The cleavage of the C10-C15 bond of probotryane skeleton is an intriguing and chemically important reaction, which could be mediated by some of the monooxygenases or by a combination of them. It is possible that either BOT3 or BOT1 would oxidize either the 10- or the 15-hydroxy group to the hydroperoxide derivative, which would then undergo heterolytic fragmentation to give the dialdehyde botrydial. Finally, the dehydrogenase BOT7 might be involved in the conversion of botrydial to dihydrobotrydial. This is Cytochrome P450 monooxygenase BOT4 from Botryotinia fuckeliana (Noble rot fungus).